Reading from the N-terminus, the 387-residue chain is Galactokinase (387 aa).

33–36 (EHTD) contributes to the substrate binding site. Residues S67 and 123 to 129 (GAGLSSS) contribute to the ATP site. Mg(2+) is bound by residues S129 and E161. D173 serves as the catalytic Proton acceptor. Y223 is a binding site for substrate.

It belongs to the GHMP kinase family. GalK subfamily.

The protein resides in the cytoplasm. The enzyme catalyses alpha-D-galactose + ATP = alpha-D-galactose 1-phosphate + ADP + H(+). Its pathway is carbohydrate metabolism; galactose metabolism. Catalyzes the transfer of the gamma-phosphate of ATP to D-galactose to form alpha-D-galactose-1-phosphate (Gal-1-P). The polypeptide is Galactokinase (Lacticaseibacillus casei (Lactobacillus casei)).